The following is a 164-amino-acid chain: Large ribosomal subunit protein bL19 (164 aa).

The disordered stretch occupies residues Glu144–Lys164.

This sequence belongs to the bacterial ribosomal protein bL19 family.

Functionally, this protein is located at the 30S-50S ribosomal subunit interface and may play a role in the structure and function of the aminoacyl-tRNA binding site. The chain is Large ribosomal subunit protein bL19 from Pelagibacter ubique (strain HTCC1062).